Consider the following 307-residue polypeptide: Ribosomal RNA small subunit methyltransferase H (307 aa).

S-adenosyl-L-methionine contacts are provided by residues 32–34 (GGH), D52, F78, D100, and Q107.

The protein belongs to the methyltransferase superfamily. RsmH family.

The protein resides in the cytoplasm. It carries out the reaction cytidine(1402) in 16S rRNA + S-adenosyl-L-methionine = N(4)-methylcytidine(1402) in 16S rRNA + S-adenosyl-L-homocysteine + H(+). Specifically methylates the N4 position of cytidine in position 1402 (C1402) of 16S rRNA. This is Ribosomal RNA small subunit methyltransferase H from Coxiella burnetii (strain Dugway 5J108-111).